The primary structure comprises 405 residues: Imidazolonepropionase (405 aa).

Fe(3+) is bound by residues H72 and H74. Residues H72 and H74 each coordinate Zn(2+). Residues R81, Y144, and H177 each contribute to the 4-imidazolone-5-propanoate site. Y144 lines the N-formimidoyl-L-glutamate pocket. H242 serves as a coordination point for Fe(3+). H242 contacts Zn(2+). A 4-imidazolone-5-propanoate-binding site is contributed by Q245. D317 provides a ligand contact to Fe(3+). D317 is a Zn(2+) binding site. N-formimidoyl-L-glutamate is bound by residues N319 and G321. T322 contacts 4-imidazolone-5-propanoate.

This sequence belongs to the metallo-dependent hydrolases superfamily. HutI family. It depends on Zn(2+) as a cofactor. Requires Fe(3+) as cofactor.

The protein resides in the cytoplasm. It catalyses the reaction 4-imidazolone-5-propanoate + H2O = N-formimidoyl-L-glutamate. It functions in the pathway amino-acid degradation; L-histidine degradation into L-glutamate; N-formimidoyl-L-glutamate from L-histidine: step 3/3. Its function is as follows. Catalyzes the hydrolytic cleavage of the carbon-nitrogen bond in imidazolone-5-propanoate to yield N-formimidoyl-L-glutamate. It is the third step in the universal histidine degradation pathway. The chain is Imidazolonepropionase from Klebsiella pneumoniae (strain 342).